A 920-amino-acid polypeptide reads, in one-letter code: Isoleucine--tRNA ligase (920 aa).

Positions 58–68 (PYANGHLHLGH) match the 'HIGH' region motif. Glu-569 contributes to the L-isoleucyl-5'-AMP binding site. Positions 610–614 (KMSKS) match the 'KMSKS' region motif. Lys-613 provides a ligand contact to ATP. Zn(2+)-binding residues include Cys-895, Cys-898, Cys-910, and Cys-913.

Belongs to the class-I aminoacyl-tRNA synthetase family. IleS type 1 subfamily. Monomer. The cofactor is Zn(2+).

The protein resides in the cytoplasm. The catalysed reaction is tRNA(Ile) + L-isoleucine + ATP = L-isoleucyl-tRNA(Ile) + AMP + diphosphate. Functionally, catalyzes the attachment of isoleucine to tRNA(Ile). As IleRS can inadvertently accommodate and process structurally similar amino acids such as valine, to avoid such errors it has two additional distinct tRNA(Ile)-dependent editing activities. One activity is designated as 'pretransfer' editing and involves the hydrolysis of activated Val-AMP. The other activity is designated 'posttransfer' editing and involves deacylation of mischarged Val-tRNA(Ile). In Helicobacter pylori (strain Shi470), this protein is Isoleucine--tRNA ligase.